Reading from the N-terminus, the 287-residue chain is MNDPDNPDLSNDDSAWRELTLTAQDSDFFDRDTSNILSDFGWNLHHSSDHPHSLRFDSDLTQTTGVKPTTVTSSCSSSAAVSVAVTSTNNNPSATSSSSEDPAENSTASAEKTPPPETPVKEKKKAQKRIRQPRFAFMTKSDVDNLEDGYRWRKYGQKAVKNSPFPRSYYRCTNSRCTVKKRVERSSDDPSIVITTYEGQHCHQTIGFPRGGILTAHDPHSFTSHHHLPPPLPNPYYYQELLHQLHRDNNAPSPRLPRPTTEDTPAVSTPSEEGLLGDIVPQTMRNP.

The span at 86–99 shows a compositional bias: low complexity; sequence TSTNNNPSATSSSS. The tract at residues 86–137 is disordered; sequence TSTNNNPSATSSSSEDPAENSTASAEKTPPPETPVKEKKKAQKRIRQPRFAF. The segment covering 122–132 has biased composition (basic residues); that stretch reads EKKKAQKRIRQ. The WRKY DNA-binding region spans 141 to 206; the sequence is SDVDNLEDGY…YEGQHCHQTI (66 aa). A disordered region spans residues 248-287; that stretch reads DNNAPSPRLPRPTTEDTPAVSTPSEEGLLGDIVPQTMRNP. Positions 262–271 are enriched in polar residues; the sequence is EDTPAVSTPS.

Belongs to the WRKY group II-c family.

It localises to the nucleus. Functionally, transcription factor. Interacts specifically with the W box (5'-(T)TGAC[CT]-3'), a frequently occurring elicitor-responsive cis-acting element. This is Probable WRKY transcription factor 57 (WRKY57) from Arabidopsis thaliana (Mouse-ear cress).